The chain runs to 2309 residues: Collagen alpha-4(VI) chain (2309 aa).

The signal sequence occupies residues 1-22; the sequence is MGTWKTFWLIISLAAGLGFVKS. Positions 21–1410 are nonhelical region; sequence KSQRIVCREA…TCCNMYAKCY (1390 aa). VWFA domains lie at 34-206, 235-413, 430-653, 634-811, 849-1018, and 1030-1199; these read DIVF…AQKL, DIVF…LQAL, DVVF…FQRV, DLVF…GNKL, DIYF…IRDI, and DIIF…EKEI. Residue asparagine 188 is glycosylated (N-linked (GlcNAc...) asparagine). Residue asparagine 754 is glycosylated (N-linked (GlcNAc...) asparagine). Asparagine 1114 carries N-linked (GlcNAc...) asparagine glycosylation. The interval 1411–1744 is triple-helical region; that stretch reads GDDGIRGEPG…GKMGTKGSKG (334 aa). Basic and acidic residues predominate over residues 1414–1430; it reads GIRGEPGSRGEQGERGL. The interval 1414 to 1746 is disordered; it reads GIRGEPGSRG…MGTKGSKGLA (333 aa). Residues 1480–1489 show a composition bias toward gly residues; that stretch reads GEEGVGGLDG. Residues 1527-1529 carry the Cell attachment site motif; sequence RGD. 2 stretches are compositionally biased toward low complexity: residues 1605–1621 and 1650–1669; these read PRGRQGPPGFFGQKGDP and PAGERGPRGQQGPRGQPGLF. The tract at residues 1745–2309 is nonhelical region; it reads LADRTPCEIV…EGECLNYVLK (565 aa). VWFA domains are found at residues 1776–1957 and 1982–2187; these read EVVF…ASCT and DLVF…LNLL. Residues 2208–2210 carry the Cell attachment site motif; it reads RGD. The segment at 2262-2300 is disordered; the sequence is ALGSHGKDRADTEDIDQETPAKGRHLGPTHGPCPMGPEE.

Belongs to the type VI collagen family. In terms of assembly, trimers composed of three different chains: alpha-1(VI), alpha-2(VI), and alpha-3(VI) or alpha-4(VI) or alpha-5(VI) or alpha-6(VI). Prolines at the third position of the tripeptide repeating unit (G-X-Y) are hydroxylated in some or all of the chains. As to expression, in newborn, it is expressed in lung, kidney, brain, intestine, skin, sternum and, at weak level, calvaria. In adult, it is almost absent with some weak expression in ovary and very weak expression in spleen, lung, uterus and brain.

The protein resides in the secreted. It is found in the extracellular space. Its subcellular location is the extracellular matrix. Functionally, collagen VI acts as a cell-binding protein. This chain is Collagen alpha-4(VI) chain (Col6a4), found in Mus musculus (Mouse).